The chain runs to 30 residues: Dermonecrotic toxin LlSicTox-alphaIII-1 (30 aa).

Histidine 12 is an active-site residue.

Belongs to the arthropod phospholipase D family. Class I subfamily. Mg(2+) is required as a cofactor. In terms of processing, contains 1 disulfide bond. In terms of tissue distribution, expressed by the venom gland.

The protein resides in the secreted. The enzyme catalyses an N-(acyl)-sphingosylphosphocholine = an N-(acyl)-sphingosyl-1,3-cyclic phosphate + choline. The catalysed reaction is an N-(acyl)-sphingosylphosphoethanolamine = an N-(acyl)-sphingosyl-1,3-cyclic phosphate + ethanolamine. It catalyses the reaction a 1-acyl-sn-glycero-3-phosphocholine = a 1-acyl-sn-glycero-2,3-cyclic phosphate + choline. It carries out the reaction a 1-acyl-sn-glycero-3-phosphoethanolamine = a 1-acyl-sn-glycero-2,3-cyclic phosphate + ethanolamine. Dermonecrotic toxins cleave the phosphodiester linkage between the phosphate and headgroup of certain phospholipids (sphingolipid and lysolipid substrates), forming an alcohol (often choline) and a cyclic phosphate. This toxin acts on sphingomyelin (SM). It may also act on ceramide phosphoethanolamine (CPE), lysophosphatidylcholine (LPC) and lysophosphatidylethanolamine (LPE), but not on lysophosphatidylserine (LPS), and lysophosphatidylglycerol (LPG). It acts by transphosphatidylation, releasing exclusively cyclic phosphate products as second products. In vivo, intradermal injection induces dermonecrosis. Induces hemolysis, increased vascular permeability, edema, inflammatory response, and platelet aggregation. In Loxosceles laeta (South American recluse spider), this protein is Dermonecrotic toxin LlSicTox-alphaIII-1.